The chain runs to 613 residues: Dihydroxy-acid dehydratase (613 aa).

D81 is a Mg(2+) binding site. Residue C122 coordinates [2Fe-2S] cluster. D123 and K124 together coordinate Mg(2+). Residue K124 is modified to N6-carboxylysine. C195 provides a ligand contact to [2Fe-2S] cluster. E491 contributes to the Mg(2+) binding site. S517 functions as the Proton acceptor in the catalytic mechanism.

This sequence belongs to the IlvD/Edd family. As to quaternary structure, homodimer. It depends on [2Fe-2S] cluster as a cofactor. The cofactor is Mg(2+).

The enzyme catalyses (2R)-2,3-dihydroxy-3-methylbutanoate = 3-methyl-2-oxobutanoate + H2O. It catalyses the reaction (2R,3R)-2,3-dihydroxy-3-methylpentanoate = (S)-3-methyl-2-oxopentanoate + H2O. The protein operates within amino-acid biosynthesis; L-isoleucine biosynthesis; L-isoleucine from 2-oxobutanoate: step 3/4. Its pathway is amino-acid biosynthesis; L-valine biosynthesis; L-valine from pyruvate: step 3/4. In terms of biological role, functions in the biosynthesis of branched-chain amino acids. Catalyzes the dehydration of (2R,3R)-2,3-dihydroxy-3-methylpentanoate (2,3-dihydroxy-3-methylvalerate) into 2-oxo-3-methylpentanoate (2-oxo-3-methylvalerate) and of (2R)-2,3-dihydroxy-3-methylbutanoate (2,3-dihydroxyisovalerate) into 2-oxo-3-methylbutanoate (2-oxoisovalerate), the penultimate precursor to L-isoleucine and L-valine, respectively. The chain is Dihydroxy-acid dehydratase from Aliivibrio fischeri (strain ATCC 700601 / ES114) (Vibrio fischeri).